A 501-amino-acid polypeptide reads, in one-letter code: Solute carrier family 2, facilitated glucose transporter member 5 (501 aa).

Met-1 carries the post-translational modification N-acetylmethionine. Residues 1–17 lie on the Cytoplasmic side of the membrane; sequence MEEKHQEETGELTLVLA. Residues 18-38 form a helical membrane-spanning segment; the sequence is LATLIAAFGSSFQYGYNVAAV. Tyr-31 serves as a coordination point for D-fructose. Over 39–67 the chain is Extracellular; sequence NSPSEFMQQFYNDTYYDRNEENIESFTLT. A glycan (N-linked (GlcNAc...) asparagine) is linked at Asn-50. The chain crosses the membrane as a helical span at residues 68 to 90; that stretch reads LLWSLTVSMFPFGGFIGSLMVGT. The Cytoplasmic segment spans residues 91 to 97; sequence LVNKLGR. The helical transmembrane segment at 98 to 118 threads the bilayer; that stretch reads KGALLFNNIFSILPAILMGCS. Residues 119 to 125 are Extracellular-facing; the sequence is QIAQSFE. A helical membrane pass occupies residues 126-148; it reads LIIISRLLVGICAGISSNVVPMY. The Cytoplasmic portion of the chain corresponds to 149 to 160; sequence LGELAPKNLRGA. The chain crosses the membrane as a helical span at residues 161-181; sequence LGVVPQLFITVGILVAQLFGL. Gln-166 provides a ligand contact to D-fructose. Residues 182 to 191 are Extracellular-facing; it reads RSLLANEDGW. A helical membrane pass occupies residues 192–212; that stretch reads PVLLGLTGVPAGLQLLLLPFF. Over 213–276 the chain is Cytoplasmic; the sequence is PESPRYLLIQ…LFTMQSLRWQ (64 aa). A helical membrane pass occupies residues 277–297; sequence LISMIVLMAGQQLSGVNAIYY. Residues Gln-287 and 295–297 each bind D-fructose; that span reads IYY. Topologically, residues 298-312 are extracellular; it reads YADQIYLSAGVKSDD. A helical membrane pass occupies residues 313–333; the sequence is VQYVTAGTGAVNVFMTILTIF. The Cytoplasmic portion of the chain corresponds to 334 to 341; sequence VVELWGRR. The helical transmembrane segment at 342 to 362 threads the bilayer; that stretch reads FLLLVGFSTCLIACLVLTAAL. Over 363-370 the chain is Extracellular; that stretch reads ALQNTISW. Residues 371-393 form a helical membrane-spanning segment; sequence MPYISIVCVIVYVIGHALGPSPI. Position 386 (His-386) interacts with D-fructose. Over 394-411 the chain is Cytoplasmic; the sequence is PALLITEIFLQSSRPAAY. Residues 412–432 traverse the membrane as a helical segment; sequence MIGGSVHWLSNFTVGLIFPFI. 418 to 419 serves as a coordination point for D-fructose; that stretch reads HW. At 433–438 the chain is on the extracellular side; it reads QMGLGP. Residues 439 to 459 traverse the membrane as a helical segment; the sequence is YSFIIFATICFLTTIYIFMVV. The Cytoplasmic portion of the chain corresponds to 460 to 501; that stretch reads PETKGRTFIEINQIFTMKNKVSDVYPKKEEELGALPHAILEQ.

Belongs to the major facilitator superfamily. Sugar transporter (TC 2.A.1.1) family. Glucose transporter subfamily. Detected at the apical membrane of villi in the jejunum. Detected in jejunum mucosa. Detected in epididymis and whole testis (at protein level). Detected in small intestine, kidney and testis. Detected in cochlea, but not in inner or outer cochlear hair cells.

The protein localises to the apical cell membrane. It localises to the cell membrane. It is found in the sarcolemma. It carries out the reaction D-fructose(out) = D-fructose(in). Fructose uptake is inhibited by cytochalasin B. Functions as a fructose transporter that has only low activity with other monosaccharides. Can mediate the uptake of deoxyglucose, but with low efficiency. Essential for fructose uptake in the small intestine. Plays a role in the regulation of salt uptake and blood pressure in response to dietary fructose. Required for the development of high blood pressure in response to high dietary fructose intake. This is Solute carrier family 2, facilitated glucose transporter member 5 from Mus musculus (Mouse).